The primary structure comprises 538 residues: Nicotinate phosphoribosyltransferase (538 aa).

Residues tyrosine 21 and threonine 210 each contribute to the nicotinate site. At histidine 213 the chain carries Phosphohistidine. Arginine 318 is a binding site for nicotinate. Threonine 380 is a binding site for 5-phospho-alpha-D-ribose 1-diphosphate.

The protein belongs to the NAPRTase family. In terms of assembly, homodimer. Mg(2+) is required as a cofactor. It depends on Mn(2+) as a cofactor. Post-translationally, transiently phosphorylated on a His residue during the reaction cycle. Phosphorylation strongly increases the affinity for substrates and increases the rate of nicotinate D-ribonucleotide production. Dephosphorylation regenerates the low-affinity form of the enzyme, leading to product release.

It localises to the cytoplasm. It is found in the cytosol. The catalysed reaction is nicotinate + 5-phospho-alpha-D-ribose 1-diphosphate + ATP + H2O = nicotinate beta-D-ribonucleotide + ADP + phosphate + diphosphate. It participates in cofactor biosynthesis; NAD(+) biosynthesis; nicotinate D-ribonucleotide from nicotinate: step 1/1. Functionally, catalyzes the first step in the biosynthesis of NAD from nicotinic acid, the ATP-dependent synthesis of beta-nicotinate D-ribonucleotide from nicotinate and 5-phospho-D-ribose 1-phosphate. Helps prevent cellular oxidative stress via its role in NAD biosynthesis. This chain is Nicotinate phosphoribosyltransferase (NAPRT), found in Bos taurus (Bovine).